Here is a 321-residue protein sequence, read N- to C-terminus: Ribonuclease Z (321 aa).

Zn(2+) contacts are provided by histidine 62, histidine 64, aspartate 66, histidine 67, histidine 139, aspartate 210, and histidine 268. The Proton acceptor role is filled by aspartate 66.

It belongs to the RNase Z family. As to quaternary structure, homodimer. Zn(2+) serves as cofactor.

The catalysed reaction is Endonucleolytic cleavage of RNA, removing extra 3' nucleotides from tRNA precursor, generating 3' termini of tRNAs. A 3'-hydroxy group is left at the tRNA terminus and a 5'-phosphoryl group is left at the trailer molecule.. Functionally, zinc phosphodiesterase, which displays some tRNA 3'-processing endonuclease activity. Probably involved in tRNA maturation, by removing a 3'-trailer from precursor tRNA. This is Ribonuclease Z from Trichodesmium erythraeum (strain IMS101).